We begin with the raw amino-acid sequence, 188 residues long: MEIKLFGKWDSETVTVKDPSLKSYVSVTPVLVPHTAGRNSKKSFDKSKMNIVERLANKLMANQNNTGKKHETLAIVEEALTIIENRTKENPVQVLVDALENSGPREETTRISYGGIAFLQSVDVSPSRRLDTAFRNIALGASQSAHKNKKTVAQCLADEIIFASKADMQKSFAVRKKEEKERVAQSAR.

The protein belongs to the universal ribosomal protein uS7 family. As to quaternary structure, part of the 30S ribosomal subunit.

Functionally, one of the primary rRNA binding proteins, it binds directly to 16S rRNA where it nucleates assembly of the head domain of the 30S subunit. Is located at the subunit interface close to the decoding center. In Methanococcus maripaludis (strain C6 / ATCC BAA-1332), this protein is Small ribosomal subunit protein uS7.